Consider the following 1160-residue polypeptide: Transcription factor tau 138 kDa subunit (1160 aa).

Residues 475-533 (PNSKKTPNKNKRKRQVKNSTNASVAGNISNPKRIKLEQHVSTAQEPKSAEDSPSSNGGT) form a disordered region. The segment covering 480-490 (TPNKNKRKRQV) has biased composition (basic residues). 2 stretches are compositionally biased toward polar residues: residues 491 to 504 (KNSTNASVAGNISN) and 513 to 529 (HVSTAQEPKSAEDSPSS). Position 546 is a phosphoserine (S546).

As to quaternary structure, component of the TFIIIC complex composed of TFC1, TFC3, TFC4, TFC6, TFC7 and TFC8. The subunits are organized in two globular domains, tauA and tauB, connected by a proteolysis-sensitive and flexible linker. Interacts with TFC1, TFC4 and TFC6.

Its subcellular location is the nucleus. The protein resides in the mitochondrion. TFIIIC mediates tRNA and 5S RNA gene activation by binding to intragenic promoter elements. Upstream of the transcription start site, TFIIIC assembles the initiation complex TFIIIB-TFIIIC-tDNA, which is sufficient for RNA polymerase III recruitment and function. Part of the tauB domain of TFIIIC that binds boxB DNA promoter sites of tRNA and similar genes. TFC3 is essential for cell viability. Cooperates with TFC6 in DNA binding. This chain is Transcription factor tau 138 kDa subunit (TFC3), found in Saccharomyces cerevisiae (strain ATCC 204508 / S288c) (Baker's yeast).